The primary structure comprises 879 residues: Alanine--tRNA ligase (879 aa).

Residues His-566, His-570, Cys-668, and His-672 each contribute to the Zn(2+) site.

Belongs to the class-II aminoacyl-tRNA synthetase family. It depends on Zn(2+) as a cofactor.

It localises to the cytoplasm. It catalyses the reaction tRNA(Ala) + L-alanine + ATP = L-alanyl-tRNA(Ala) + AMP + diphosphate. Functionally, catalyzes the attachment of alanine to tRNA(Ala) in a two-step reaction: alanine is first activated by ATP to form Ala-AMP and then transferred to the acceptor end of tRNA(Ala). Also edits incorrectly charged Ser-tRNA(Ala) and Gly-tRNA(Ala) via its editing domain. The chain is Alanine--tRNA ligase from Listeria monocytogenes serotype 4b (strain F2365).